The primary structure comprises 1183 residues: DNA-directed RNA polymerase subunit beta (1183 aa).

It belongs to the RNA polymerase beta chain family. As to quaternary structure, the RNAP catalytic core consists of 2 alpha, 1 beta, 1 beta' and 1 omega subunit. When a sigma factor is associated with the core the holoenzyme is formed, which can initiate transcription.

The catalysed reaction is RNA(n) + a ribonucleoside 5'-triphosphate = RNA(n+1) + diphosphate. DNA-dependent RNA polymerase catalyzes the transcription of DNA into RNA using the four ribonucleoside triphosphates as substrates. The sequence is that of DNA-directed RNA polymerase subunit beta from Staphylococcus aureus (strain Mu3 / ATCC 700698).